A 135-amino-acid polypeptide reads, in one-letter code: Basic phospholipase A2 KBf-VA (135 aa).

Cystine bridges form between Cys-28–Cys-87, Cys-42–Cys-134, Cys-44–Cys-60, Cys-59–Cys-115, Cys-66–Cys-108, Cys-76–Cys-101, and Cys-94–Cys-106. Positions 43, 45, and 47 each coordinate Ca(2+). The active site involves His-63. Asp-64 is a Ca(2+) binding site. The active site involves Asp-109.

Belongs to the phospholipase A2 family. Group I subfamily. D49 sub-subfamily. Ca(2+) serves as cofactor. Expressed by the venom gland.

The protein localises to the secreted. The catalysed reaction is a 1,2-diacyl-sn-glycero-3-phosphocholine + H2O = a 1-acyl-sn-glycero-3-phosphocholine + a fatty acid + H(+). Snake venom phospholipase A2 (PLA2) that inhibits neuromuscular transmission by blocking acetylcholine release from the nerve termini. PLA2 catalyzes the calcium-dependent hydrolysis of the 2-acyl groups in 3-sn-phosphoglycerides. This Bungarus fasciatus (Banded krait) protein is Basic phospholipase A2 KBf-VA.